Here is a 137-residue protein sequence, read N- to C-terminus: Ribosomal RNA large subunit methyltransferase H (137 aa).

S-adenosyl-L-methionine contacts are provided by residues Leu56, Gly85, and 104-109 (LSPLTL).

This sequence belongs to the RNA methyltransferase RlmH family. As to quaternary structure, homodimer.

It localises to the cytoplasm. The catalysed reaction is pseudouridine(1915) in 23S rRNA + S-adenosyl-L-methionine = N(3)-methylpseudouridine(1915) in 23S rRNA + S-adenosyl-L-homocysteine + H(+). Functionally, specifically methylates the pseudouridine at position 1915 (m3Psi1915) in 23S rRNA. The chain is Ribosomal RNA large subunit methyltransferase H from Thermus thermophilus (strain ATCC 27634 / DSM 579 / HB8).